A 261-amino-acid polypeptide reads, in one-letter code: METEVEHTGLAIHPMDQFIVKKLFCHTESTAPMNECTTNIHWYDITNVTMWMAIAVLVIAAILVLGTRRRAIVPSRSQSVAELLYGFIHNMVEEVTGHEGVKYFPYVMTLFLFVLCGNVLGLLPLSFTTTSHMAVTVPLALMVFVGVTALGFMKNGPGFLKMFWVTSAPLAIRPVLAVIEVISYFVRPVSHSIRLAGNMMAGHAVIKVIAGFASIVVVSPVVVGAVTAIYALELLVAVVQAYVFTILTCVYLRDAVGDAHH.

The next 6 helical transmembrane spans lie at 45 to 65, 107 to 127, 133 to 153, 162 to 182, 209 to 229, and 232 to 252; these read ITNV…ILVL, VMTL…PLSF, MAVT…LGFM, MFWV…IEVI, IAGF…VTAI, and LELL…CVYL.

The protein belongs to the ATPase A chain family. F-type ATPases have 2 components, CF(1) - the catalytic core - and CF(0) - the membrane proton channel. CF(1) has five subunits: alpha(3), beta(3), gamma(1), delta(1), epsilon(1). CF(0) has four main subunits: a, b, b' and c.

It localises to the cell inner membrane. In terms of biological role, key component of the proton channel; it plays a direct role in the translocation of protons across the membrane. The protein is ATP synthase subunit a of Cereibacter sphaeroides (strain ATCC 17029 / ATH 2.4.9) (Rhodobacter sphaeroides).